We begin with the raw amino-acid sequence, 277 residues long: Uridine-cytidine kinase 1 (277 aa).

24 to 32 (GGTASGKST) is an ATP binding site. The substrate site is built by D81, Y109, H114, R163, R172, and Q180. D209 lines the ATP pocket. The segment at 241–277 (NHGRSLKRGVAEHGENPSGSSSNLTKRPLLEPSTRPH) is disordered.

Belongs to the uridine kinase family.

The catalysed reaction is uridine + ATP = UMP + ADP + H(+). It carries out the reaction cytidine + ATP = CMP + ADP + H(+). It participates in pyrimidine metabolism; CTP biosynthesis via salvage pathway; CTP from cytidine: step 1/3. Its pathway is pyrimidine metabolism; UMP biosynthesis via salvage pathway; UMP from uridine: step 1/1. Its function is as follows. Phosphorylates uridine and cytidine to uridine monophosphate and cytidine monophosphate. Does not phosphorylate deoxyribonucleosides or purine ribonucleosides. Can use ATP or GTP as a phosphate donor. This chain is Uridine-cytidine kinase 1 (uck1), found in Danio rerio (Zebrafish).